The chain runs to 269 residues: Carbohydrate metabolism regulator TYE7 (269 aa).

Positions 146–178 are disordered; the sequence is QPKIKQEPGTKAATKPKRRAPRKKLTESQKKAH. A compositionally biased stretch (basic residues) spans 159-168; it reads TKPKRRAPRK. The span at 169 to 178 shows a compositional bias: basic and acidic residues; sequence KLTESQKKAH. In terms of domain architecture, bHLH spans 173–244; it reads SQKKAHNKIE…EKATEYILHL (72 aa).

Efficient DNA binding requires dimerization with another bHLH protein.

The protein resides in the nucleus. In terms of biological role, key transcriptional regulator of carbohydrate metabolism. Binds the promoter sequences of the glycolytic genes at the CANNTG motif and activates their expression during growth on either fermentable or non-fermentable carbon sources as well as under hypoxic growth conditions. Complete glycolytic activation by GAL4 and TYE7 is required for full virulence. Involved in biofilm formation and negatively regulates hyphal formation under hypoxia. Also controls the expression of the copper transport protein CTR1. This Candida albicans (strain SC5314 / ATCC MYA-2876) (Yeast) protein is Carbohydrate metabolism regulator TYE7 (TYE7).